Consider the following 468-residue polypeptide: UDP-N-acetylmuramoyl-L-alanine--L-glutamate ligase (468 aa).

122 to 128 (GTKGKST) lines the ATP pocket.

It belongs to the MurCDEF family. MurD2 subfamily.

The protein localises to the cytoplasm. It carries out the reaction UDP-N-acetyl-alpha-D-muramoyl-L-alanine + L-glutamate + ATP = UDP-N-acetyl-alpha-D-muramoyl-L-alanyl-L-glutamate + ADP + phosphate + H(+). The protein operates within cell wall biogenesis; peptidoglycan biosynthesis. Functionally, cell wall formation. Catalyzes the addition of L-glutamate to the nucleotide precursor UDP-N-acetylmuramoyl-L-alanine. In Xylella fastidiosa (strain 9a5c), this protein is UDP-N-acetylmuramoyl-L-alanine--L-glutamate ligase.